Here is a 551-residue protein sequence, read N- to C-terminus: HTH-type transcriptional regulator SgrR (551 aa).

The HTH marR-type domain maps to 1–116 (MPSARLQQQF…LVSHLGRSFR (116 aa)). The H-T-H motif DNA-binding region spans 26-49 (LNELAALLSCSRRHMRTLLNTMQD). The interval 163-492 (ELEADIAHHW…IDWQADAARW (330 aa)) is solute-binding.

Functionally, activates the small RNA gene sgrS under glucose-phosphate stress conditions as well as yfdZ. Represses its own transcription under both stress and non-stress conditions. Might act as a sensor of the intracellular accumulation of phosphoglucose by binding these molecules in its C-terminal solute-binding domain. In Escherichia coli O6:K15:H31 (strain 536 / UPEC), this protein is HTH-type transcriptional regulator SgrR.